We begin with the raw amino-acid sequence, 426 residues long: Stationary phase-inducible protein CsiE (426 aa).

PRD domains follow at residues 120–225 and 229–336; these read ARNF…DPLR and QRDR…ENDL.

The polypeptide is Stationary phase-inducible protein CsiE (csiE) (Escherichia coli (strain K12)).